The chain runs to 173 residues: MKKIRGLCLPVMLGAVLMSQHVHAADNLTFKGKLIIPACTVQNAEVNWGDIEIQNLVQSGGNQKDFTVDMNCPYSLGTMKVTITSNGQTGNSILVPNTSTASGDGLLIYLYNSNNSGIGNAVTLGSQVTPGKITGTAPARKITLYAKLGYKGNMQSLQAGTFSATATLVASYS.

Residues Met1 to Ala24 form the signal peptide.

The protein resides in the secreted. Its subcellular location is the fimbrium. In terms of biological role, fimbriae (also called pili), polar filaments radiating from the surface of the bacterium to a length of 0.5-1.5 micrometers and numbering 100-300 per cell, enable bacteria to colonize the epithelium of specific host organs. The protein is Fimbrial protein PrsE (prsE) of Escherichia coli.